The primary structure comprises 1155 residues: uncharacterized protein (1155 aa).

A signal peptide spans 1–19 (MNKNIFITLLISSLLLLSG). A lipid anchor (N-palmitoyl cysteine) is attached at Cys-20. Cys-20 is lipidated: S-diacylglycerol cysteine. A run of 4 helical transmembrane segments spans residues 291-311 (VSAI…IGNI), 395-415 (LGFI…FLIF), 424-444 (ALIT…FMLF), and 459-479 (ISYA…SMII).

It belongs to the TrbL/VirB6 family.

Its subcellular location is the cell membrane. This is an uncharacterized protein from Rickettsia felis (strain ATCC VR-1525 / URRWXCal2) (Rickettsia azadi).